The primary structure comprises 482 residues: Adenylyltransferase and sulfurtransferase uba4 (482 aa).

Residues 33-57 (EGAALRAQSQKTASANATTGQRTKS) form a disordered region. Polar residues predominate over residues 39-54 (AQSQKTASANATTGQR). ATP is bound by residues G98, D119, 126-130 (SNLHR), K143, and 187-188 (DN). 2 residues coordinate Zn(2+): C236 and C239. The Glycyl thioester intermediate; for adenylyltransferase activity role is filled by C253. Zn(2+)-binding residues include C315 and C318. Residues 366 to 480 (AGAQRHIIDV…WREQVDPDWP (115 aa)) form the Rhodanese domain. C435 serves as the catalytic Cysteine persulfide intermediate; for sulfurtransferase activity.

In the N-terminal section; belongs to the HesA/MoeB/ThiF family. UBA4 subfamily. Requires Zn(2+) as cofactor.

It is found in the cytoplasm. It localises to the cytosol. It catalyses the reaction [molybdopterin-synthase sulfur-carrier protein]-C-terminal Gly-Gly + ATP + H(+) = [molybdopterin-synthase sulfur-carrier protein]-C-terminal Gly-Gly-AMP + diphosphate. It carries out the reaction [molybdopterin-synthase sulfur-carrier protein]-C-terminal Gly-Gly-AMP + S-sulfanyl-L-cysteinyl-[cysteine desulfurase] + AH2 = [molybdopterin-synthase sulfur-carrier protein]-C-terminal-Gly-aminoethanethioate + L-cysteinyl-[cysteine desulfurase] + A + AMP + 2 H(+). The protein operates within tRNA modification; 5-methoxycarbonylmethyl-2-thiouridine-tRNA biosynthesis. It functions in the pathway cofactor biosynthesis; molybdopterin biosynthesis. In terms of biological role, plays a central role in 2-thiolation of mcm(5)S(2)U at tRNA wobble positions of cytosolic tRNA(Lys), tRNA(Glu) and tRNA(Gln). Also essential during biosynthesis of the molybdenum cofactor. Acts by mediating the C-terminal thiocarboxylation of sulfur carriers urm1 and mocs2a. Its N-terminus first activates urm1 and mocs2a as acyl-adenylates (-COAMP), then the persulfide sulfur on the catalytic cysteine is transferred to urm1 and mocs2a to form thiocarboxylation (-COSH) of their C-terminus. The reaction probably involves hydrogen sulfide that is generated from the persulfide intermediate and that acts as a nucleophile towards urm1 and mocs2a. Subsequently, a transient disulfide bond is formed. Does not use thiosulfate as sulfur donor; nfs1 probably acting as a sulfur donor for thiocarboxylation reactions. The sequence is that of Adenylyltransferase and sulfurtransferase uba4 from Emericella nidulans (strain FGSC A4 / ATCC 38163 / CBS 112.46 / NRRL 194 / M139) (Aspergillus nidulans).